We begin with the raw amino-acid sequence, 148 residues long: Snaclec 4 (148 aa).

An N-terminal signal peptide occupies residues methionine 1–alanine 23. Positions tyrosine 34 to glycine 148 constitute a C-type lectin domain.

It belongs to the snaclec family. In terms of assembly, heterodimer; disulfide-linked. Post-translationally, contains disulfide bonds. Expressed by the venom gland.

It is found in the secreted. Functionally, interferes with one step of hemostasis (modulation of platelet aggregation, or coagulation cascade, for example). The chain is Snaclec 4 from Echis pyramidum leakeyi (Leakey's carpet viper).